Here is a 453-residue protein sequence, read N- to C-terminus: MSFDLIIKNGTVILENEARVVDIAVKGGKIAAIGQDLGDAKEVMDASGLVVSPGMVDAHTHISEPGRSHWEGYETGTRAAAKGGITTMIEMPLNQLPATVDRASIELKFDAAKGKLTIDAAQLGGLVSYNIDRLHELDEVGVVGFKCFVATCGDRGIDNDFRDVNDWQFFKGAQKLGELGQPVLVHCENALICDALGEEAKREGRVTAHDYVASRPVFTEVEAIRRVLYLAKVAGCRLHVCHISSPEGVEEVTRARQEGQDVTCESCPHYFVLDTDQFEEIGTLAKCSPPIRDLENQKGMWEKLFNGEIDCLVSDHSPCPPEMKAGNIMEAWGGIAGLQNCMDVMFDEAVQKRGMSLPMFGKLMATNAADIFGLQQKGRIAPGKDADFVFIQPNSSYVLTNDDLEYRHKVSPYVGRTIGARITKTILRGDVIYDIEQGFPVAPKGQFILKHQQ.

6 residues coordinate Zn(2+): His59, His61, Lys146, His186, His242, and Asp315. At Lys146 the chain carries N6-carboxylysine.

The protein belongs to the metallo-dependent hydrolases superfamily. Allantoinase family. As to quaternary structure, homotetramer. It depends on Zn(2+) as a cofactor. Carboxylation allows a single lysine to coordinate two zinc ions.

It carries out the reaction (S)-allantoin + H2O = allantoate + H(+). It participates in nitrogen metabolism; (S)-allantoin degradation; allantoate from (S)-allantoin: step 1/1. Catalyzes the conversion of allantoin (5-ureidohydantoin) to allantoic acid by hydrolytic cleavage of the five-member hydantoin ring. The protein is Allantoinase of Escherichia coli (strain 55989 / EAEC).